The primary structure comprises 50 residues: Protein hunchback (50 aa).

C2H2-type zinc fingers lie at residues 1–5 (HLRNH), 11–33 (FKCG…MKSH), and 39–50 (YRCANCCYATKY).

It belongs to the hunchback C2H2-type zinc-finger protein family.

Its subcellular location is the nucleus. Functionally, gap class segmentation protein that controls development of head structures. The chain is Protein hunchback (hb) from Pholcus phalangioides (Longbodied cellar spider).